The following is a 121-amino-acid chain: MTQLNSFFYVSDNTGVKKIFSIQNITRNSFLVNTTDIILGIIKEISFKSSFKYSEIVYGFVVRLKKTQNIQNRYNYIFNENAVILIDKNFNPLGTRIFGLFPENLKNNNYLKLNSLVLNII.

The protein belongs to the universal ribosomal protein uL14 family. In terms of assembly, part of the 50S ribosomal subunit.

It localises to the plastid. The protein resides in the apicoplast. Its function is as follows. Binds to 23S rRNA. The chain is Large ribosomal subunit protein uL14c (rpl14) from Toxoplasma gondii.